An 88-amino-acid chain; its full sequence is Small ribosomal subunit protein uS15c (88 aa).

This sequence belongs to the universal ribosomal protein uS15 family. Part of the 30S ribosomal subunit.

The protein resides in the plastid. Its subcellular location is the chloroplast. This Marchantia polymorpha (Common liverwort) protein is Small ribosomal subunit protein uS15c (rps15).